A 151-amino-acid chain; its full sequence is Large-conductance mechanosensitive channel (151 aa).

The next 2 helical transmembrane spans lie at 12–32 and 71–91; these read GNIVDLAVAVVIGTAFTALVT and VLLSATINFILVAGVVYFLVV. A disordered region spans residues 125–151; sequence NSNSSGRHEAPGTAGTPPPNYGPRADT.

This sequence belongs to the MscL family. As to quaternary structure, homopentamer.

It is found in the cell membrane. Functionally, channel that opens in response to stretch forces in the membrane lipid bilayer. May participate in the regulation of osmotic pressure changes within the cell. The chain is Large-conductance mechanosensitive channel from Mycobacterium ulcerans (strain Agy99).